Reading from the N-terminus, the 292-residue chain is Ventral anterior homeobox 2 (292 aa).

Over residues 1–36 the composition is skewed to basic and acidic residues; that stretch reads MGDGGAERDRGPKRREEPGGRSGRHGEHRGAEDLRA. Residues 1-74 are disordered; the sequence is MGDGGAERDR…DGQQALGETD (74 aa). The homeobox DNA-binding region spans 102–161; that stretch reads PKRTRTSFTAEQLYRLEMEFQRCQYVVGRERTELARQLNLSETQVKVWFQNRRTKQKKDQ. The interval 207 to 242 is disordered; sequence LPGLPASHRGTSLVDPRNSSPRLNPMPSASASSPLP.

The protein belongs to the EMX homeobox family. As to expression, expressed in the developing and mature retina.

It localises to the nucleus. Its function is as follows. Transcription factor that may function in dorsoventral specification of the forebrain. Regulates the expression of Wnt signaling antagonists including the expression of a truncated TCF7L2 isoform that cannot bind CTNNB1 and acts therefore as a potent dominant-negative Wnt antagonist. Plays a crucial role in eye development and, in particular, in the specification of the ventral optic vesicle. May be a regulator of axial polarization in the retina. In Mus musculus (Mouse), this protein is Ventral anterior homeobox 2 (Vax2).